The following is a 185-amino-acid chain: Photosystem I assembly protein Ycf4 (185 aa).

2 helical membrane passes run 20–40 and 57–77; these read GNFFWACILFLGSLGFLAVGA and ILFFPQGVVMSFYGIAGLFIS.

It belongs to the Ycf4 family.

The protein resides in the plastid. It is found in the chloroplast thylakoid membrane. In terms of biological role, seems to be required for the assembly of the photosystem I complex. This chain is Photosystem I assembly protein Ycf4, found in Sorghum bicolor (Sorghum).